We begin with the raw amino-acid sequence, 174 residues long: MTKRWFNVGKIVNTHGIKGEVRVISKTDFAEERYKPGNTLYLFMDGRNEPVEVTVNTHRLHKQFHLLQFKERQNLNEVEELKNAIIKVPEEELGELNEGEFYFHEIIGCEVFTEEGELIGKVKEILTPGANDVWVIGRKGKKDALIPYIESVVKHIDVREKKIEIELMEGLIDE.

The region spanning 98–171 is the PRC barrel domain; that stretch reads EGEFYFHEII…KIEIELMEGL (74 aa).

This sequence belongs to the RimM family. In terms of assembly, binds ribosomal protein uS19.

The protein resides in the cytoplasm. Its function is as follows. An accessory protein needed during the final step in the assembly of 30S ribosomal subunit, possibly for assembly of the head region. Essential for efficient processing of 16S rRNA. May be needed both before and after RbfA during the maturation of 16S rRNA. It has affinity for free ribosomal 30S subunits but not for 70S ribosomes. This Bacillus subtilis (strain 168) protein is Ribosome maturation factor RimM.